Reading from the N-terminus, the 288-residue chain is ATP synthase gamma chain (288 aa).

This sequence belongs to the ATPase gamma chain family. As to quaternary structure, F-type ATPases have 2 components, CF(1) - the catalytic core - and CF(0) - the membrane proton channel. CF(1) has five subunits: alpha(3), beta(3), gamma(1), delta(1), epsilon(1). CF(0) has three main subunits: a, b and c.

Its subcellular location is the cell inner membrane. Functionally, produces ATP from ADP in the presence of a proton gradient across the membrane. The gamma chain is believed to be important in regulating ATPase activity and the flow of protons through the CF(0) complex. The chain is ATP synthase gamma chain from Acidovorax ebreus (strain TPSY) (Diaphorobacter sp. (strain TPSY)).